The sequence spans 1432 residues: ABC transporter B family member 3 (1432 aa).

Disordered regions lie at residues 1–21 and 48–149; these read MDDGNENNENAQHDEYDEEEI and ITQP…KTEE. Low complexity-rich tracts occupy residues 52 to 62, 76 to 106, and 118 to 135; these read SNNNNNSNNNN, NNNNNNNNNNNNNNNNNNNNNNNSNNSFNNN, and NTNENNNKNNNNNNNNND. The stretch at 117-163 forms a coiled coil; it reads ENTNENNNKNNNNNNNNNDDYNDGADERVKTEEEIKKEAENELNQSV. An ABC transmembrane type-1 1 domain is found at 180 to 479; sequence MFLGTIAAVI…ASPCLALFAQ (300 aa). Helical transmembrane passes span 185 to 205, 232 to 252, 303 to 323, 325 to 345, 410 to 430, and 457 to 477; these read IAAVINGAAMPTVSLVFGLVV, LLMLGGGVFVLSYLETTLWMI, KVGRFIHFFSTFVAGFVIGFT, GWQLTLVITSVSPLLAIGGFF, GLGLGFVQFVILGTYALAFWY, and FFAVIIGATSIGQASPCLALF. In terms of domain architecture, ABC transporter 1 spans 514–750; that stretch reads IEFKDVGFHY…QGLYFDLVEK (237 aa). 549–556 is a binding site for ATP; the sequence is GDSGGGKS. Positions 787–819 are disordered; that stretch reads KRSLRKNESESNKKDKEDSNNKKKKKSNKKKVE. Residues 791–807 show a composition bias toward basic and acidic residues; that stretch reads RKNESESNKKDKEDSNN. In terms of domain architecture, ABC transmembrane type-1 2 spans 837-1157; the sequence is WCFGFLSAVG…ASSFAPDLAK (321 aa). 6 helical membrane-spanning segments follow: residues 838 to 858, 882 to 902, 968 to 988, 989 to 1009, 1060 to 1080, and 1134 to 1154; these read CFGFLSAVGTGAVYPGFAMVF, LMFVALAVGAGISNFFQGFLF, MVGGLVIAFYSGWQLTLVIIA, CFPLVVITSKVQMQILAGFSS, ISGFAFGFTQLILFCVYCLSF, and VFFAIVMSAIGVGQASSFAPD. The ABC transporter 2 domain occupies 1192–1428; sequence IEFKNLHFSY…EGPYSQLWYN (237 aa). 1227-1234 is an ATP binding site; it reads GDSGGGKS.

Belongs to the ABC transporter superfamily. ABCB family. Multidrug resistance exporter (TC 3.A.1.201) subfamily.

The protein resides in the membrane. The protein is ABC transporter B family member 3 (abcB3) of Dictyostelium discoideum (Social amoeba).